Consider the following 353-residue polypeptide: Phosphoribosylformylglycinamidine cyclo-ligase (353 aa).

It belongs to the AIR synthase family.

Its subcellular location is the cytoplasm. The enzyme catalyses 2-formamido-N(1)-(5-O-phospho-beta-D-ribosyl)acetamidine + ATP = 5-amino-1-(5-phospho-beta-D-ribosyl)imidazole + ADP + phosphate + H(+). The protein operates within purine metabolism; IMP biosynthesis via de novo pathway; 5-amino-1-(5-phospho-D-ribosyl)imidazole from N(2)-formyl-N(1)-(5-phospho-D-ribosyl)glycinamide: step 2/2. The chain is Phosphoribosylformylglycinamidine cyclo-ligase from Pseudomonas aeruginosa (strain LESB58).